Reading from the N-terminus, the 503-residue chain is Maturase K (503 aa).

The protein belongs to the intron maturase 2 family. MatK subfamily.

The protein localises to the plastid. Its subcellular location is the chloroplast. Its function is as follows. Usually encoded in the trnK tRNA gene intron. Probably assists in splicing its own and other chloroplast group II introns. The sequence is that of Maturase K from Eucalyptus globulus subsp. globulus (Tasmanian blue gum).